Consider the following 104-residue polypeptide: MKVHVRKSDTVVVISGKDKGKTGEVLKVYPKTGKVLVQGINIVKKHQKANKSQVESAIIEREAAINSSKVMLYCNKCKNATRIASKILDDGTKVRVCKKCSETF.

Belongs to the universal ribosomal protein uL24 family. As to quaternary structure, part of the 50S ribosomal subunit.

Its function is as follows. One of two assembly initiator proteins, it binds directly to the 5'-end of the 23S rRNA, where it nucleates assembly of the 50S subunit. One of the proteins that surrounds the polypeptide exit tunnel on the outside of the subunit. This Clostridium botulinum (strain Eklund 17B / Type B) protein is Large ribosomal subunit protein uL24.